A 222-amino-acid chain; its full sequence is GEM-like protein 4 (222 aa).

The region spanning 95–173 (KIFKRLFRVS…CKIDRVNQSQ (79 aa)) is the GRAM domain.

It belongs to the GEM family.

The polypeptide is GEM-like protein 4 (Arabidopsis thaliana (Mouse-ear cress)).